We begin with the raw amino-acid sequence, 457 residues long: UDP-N-acetylmuramoylalanine--D-glutamate ligase (457 aa).

116-122 contacts ATP; sequence GTNGKTT.

It belongs to the MurCDEF family.

The protein localises to the cytoplasm. The catalysed reaction is UDP-N-acetyl-alpha-D-muramoyl-L-alanine + D-glutamate + ATP = UDP-N-acetyl-alpha-D-muramoyl-L-alanyl-D-glutamate + ADP + phosphate + H(+). The protein operates within cell wall biogenesis; peptidoglycan biosynthesis. In terms of biological role, cell wall formation. Catalyzes the addition of glutamate to the nucleotide precursor UDP-N-acetylmuramoyl-L-alanine (UMA). The polypeptide is UDP-N-acetylmuramoylalanine--D-glutamate ligase (Caldicellulosiruptor bescii (strain ATCC BAA-1888 / DSM 6725 / KCTC 15123 / Z-1320) (Anaerocellum thermophilum)).